The primary structure comprises 296 residues: (+)-neomenthol dehydrogenase (296 aa).

Arginine 16 to glutamate 40 contacts NADP(+). Serine 164 provides a ligand contact to substrate. The Proton acceptor role is filled by tyrosine 220.

Belongs to the short-chain dehydrogenases/reductases (SDR) family. In terms of assembly, monomer.

It localises to the cytoplasm. The enzyme catalyses (+)-neomenthol + NADP(+) = (1R,4S)-menthone + NADPH + H(+). Aldehyde reductase that catalyzes the reduction of the aldehyde carbonyl groups on saturated and alpha,beta-unsaturated aldehydes with more than 5 carbons. Involved in basal resistance against pathogens. The polypeptide is (+)-neomenthol dehydrogenase (SDR1) (Arabidopsis thaliana (Mouse-ear cress)).